Consider the following 278-residue polypeptide: Odontogenic ameloblast-associated protein (278 aa).

A signal peptide spans 1 to 15 (MKIIILLGLIGATSS). The tract at residues 103 to 124 (GGQAGQPDFSQQQTPSQTQQAS) is disordered. Residues 107-124 (GQPDFSQQQTPSQTQQAS) are compositionally biased toward low complexity. Residues Thr-116 and Thr-120 are each glycosylated (O-linked (GalNAc...) threonine). Residues 126–128 (MSY) form an interaction with ARHGEF5 region. Residues 230–278 (GFKQDNVGVSTPSTSPKPDTGNFFTSEINPTIAPLLPEQKVNADSLREP) form a disordered region. Positions 236–258 (VGVSTPSTSPKPDTGNFFTSEIN) are enriched in polar residues. Thr-240, Thr-243, Thr-249, and Thr-254 each carry an O-linked (GalNAc...) threonine glycan.

It belongs to the ODAM family. As to quaternary structure, interacts (via C-terminus) with ARHGEF5. Post-translationally, O-glycosylated. In terms of tissue distribution, highly expressed in tooth-associated epithelia. In tooth, it is only detected in the ameloblast layer of the enamel organ, starting at post-secretory transition and extending throughout the maturation stage. Also detected in epithelial cells of the gingiva which bind it to the tooth surface (junctional epithelium) (at protein level). Predominantly expressed in mandible, but also expressed at weak level in nasal and salivary glands, and at much lower level in epididymis.

The protein resides in the secreted. The protein localises to the cytoplasm. It is found in the nucleus. In terms of biological role, tooth-associated epithelia protein that probably plays a role in odontogenesis, the complex process that results in the initiation and generation of the tooth. May be incorporated in the enamel matrix at the end of mineralization process. Involved in the induction of RHOA activity via interaction with ARHGEF and expression of downstream factors such as ROCK. Plays a role in attachment of the junctional epithelium to the tooth surface. The sequence is that of Odontogenic ameloblast-associated protein (Odam) from Rattus norvegicus (Rat).